The primary structure comprises 141 residues: MLISKRRMIHALSYEVILLVIIAIALSFIFDVPLEVTGTLGIVMAVTSVFWNMIFNHFFEKFERKHQLERTVKIRILHAIGFEGGLMLVTIPMVAYAMNMSLWQAIVLDFGLTMCILVYTFIFQWCYDTIEKRLGYTPRHS.

A run of 4 helical transmembrane segments spans residues 16–36 (VILLVIIAIALSFIFDVPLEV), 39–59 (TLGIVMAVTSVFWNMIFNHFF), 76–96 (ILHAIGFEGGLMLVTIPMVAY), and 103–123 (WQAIVLDFGLTMCILVYTFIF).

Belongs to the proteobacterial antimicrobial compound efflux (PACE) (TC 2.A.117) family.

Its subcellular location is the cell inner membrane. Its function is as follows. Mediates the efflux of short-chain diamines when energized by an electrochemical gradient. Involved in resistance to the synthetic biocide chlorhexidine, a widely used antiseptic and disinfectant in both hospital and community settings. Interacts directly with chlorhexidine and mediates its efflux via an energy-dependent mechanism. This chain is Short-chain diamines transporter, found in Acinetobacter baylyi (strain ATCC 33305 / BD413 / ADP1).